Reading from the N-terminus, the 248-residue chain is Coenzyme F420:L-glutamate ligase (248 aa).

Residues 15–18 (IPLI), 45–46 (ET), and Lys-50 each bind GTP. Residue Asp-115 coordinates a divalent metal cation. Asn-118 provides a ligand contact to GTP. The a divalent metal cation site is built by Asp-155, Ser-156, and Gln-213. 211–218 (MGQSNEGI) serves as a coordination point for GTP.

It belongs to the CofE family. In terms of assembly, homodimer. The cofactor is Mg(2+). Mn(2+) serves as cofactor. It depends on K(+) as a cofactor.

It catalyses the reaction oxidized coenzyme F420-0 + GTP + L-glutamate = oxidized coenzyme F420-1 + GDP + phosphate + H(+). It carries out the reaction oxidized coenzyme F420-1 + GTP + L-glutamate = oxidized coenzyme F420-2 + GDP + phosphate + H(+). Its pathway is cofactor biosynthesis; coenzyme F420 biosynthesis. Catalyzes the GTP-dependent successive addition of two or more gamma-linked L-glutamates to the L-lactyl phosphodiester of 7,8-didemethyl-8-hydroxy-5-deazariboflavin (F420-0) to form coenzyme F420-0-glutamyl-glutamate (F420-2) or polyglutamated F420 derivatives. This chain is Coenzyme F420:L-glutamate ligase, found in Methanococcus maripaludis (strain C7 / ATCC BAA-1331).